The sequence spans 446 residues: F-box/LRR-repeat protein At4g29420 (446 aa).

The F-box domain occupies 1–51 (MDELPPELWIKILSRINDSESLARCRVASKTLNSLSREVRAVNLICTWSRY). LRR repeat units follow at residues 59-84 (VVTP…SVGV), 103-130 (DLYL…SISD), 135-160 (SCWR…EVKN), 181-206 (FIRL…NLIG), 223-248 (CHWT…KLKC), 265-289 (HLSV…ELVS), 318-343 (QSER…SLSP), and 382-407 (NVHQ…RLMI).

The polypeptide is F-box/LRR-repeat protein At4g29420 (Arabidopsis thaliana (Mouse-ear cress)).